Reading from the N-terminus, the 192-residue chain is HTH-type transcriptional repressor SCO4008 (192 aa).

The HTH tetR-type domain occupies 7–67; the sequence is EATKARIFEA…SVLEKKMLDL (61 aa). A DNA-binding region (H-T-H motif) is located at residues 30 to 49; it reads RIDRIAAEARANKQLIYAYY.

In terms of assembly, homodimer. Four dimers bind to the two operator sites.

Binding of a wide range of cationic hydrophobic compounds to SCO4008 causes a decrease in DNA-binding, probably via allosteric conformational change of SCO4008. Probably regulates the expression of its own gene and the adjacent SCO4007 gene by binding to two operator sites in the SCO4007-SCO4008 intergenic region. The sequence is that of HTH-type transcriptional repressor SCO4008 from Streptomyces coelicolor (strain ATCC BAA-471 / A3(2) / M145).